A 98-amino-acid chain; its full sequence is Large ribosomal subunit protein uL23 (98 aa).

This sequence belongs to the universal ribosomal protein uL23 family. In terms of assembly, part of the 50S ribosomal subunit. Contacts protein L29, and trigger factor when it is bound to the ribosome.

One of the early assembly proteins it binds 23S rRNA. One of the proteins that surrounds the polypeptide exit tunnel on the outside of the ribosome. Forms the main docking site for trigger factor binding to the ribosome. The chain is Large ribosomal subunit protein uL23 from Thioalkalivibrio sulfidiphilus (strain HL-EbGR7).